Consider the following 687-residue polypeptide: Hemin receptor (687 aa).

Positions 1–28 are cleaved as a signal peptide; the sequence is MPRSTSDRFRWSPLSLAIACTLSLAVQA. The TonB box signature appears at 44-51; sequence DTMVVTAT. Residues 56 to 167 enclose the TBDR plug domain; sequence SSFEAPMMVT…LGGVISYETV (112 aa). In terms of domain architecture, TBDR beta-barrel spans 178 to 687; the sequence is NSGYRVYSAA…NAKFFVSYQW (510 aa). The segment at 319 to 338 is disordered; the sequence is ARPQGTPEEGRKQTTKGGKL. Residues 326-338 show a composition bias toward basic and acidic residues; the sequence is EEGRKQTTKGGKL. The TonB C-terminal box signature appears at 670-687; that stretch reads QGVPQDGRNAKFFVSYQW.

The protein belongs to the TonB-dependent receptor family.

The protein resides in the cell outer membrane. In terms of biological role, this protein is involved in the initial step of iron uptake by binding hemin, an iron chelatin siderophore that allows the bacteria to extract iron from the environment. The chain is Hemin receptor (hemR) from Yersinia enterocolitica.